Reading from the N-terminus, the 490-residue chain is Coagulation factor X (490 aa).

The first 20 residues, 1–20, serve as a signal peptide directing secretion; it reads MANPLHLVLLGAALAGLLLS. The propeptide occupies 21–40; it reads GSSVFISRRAANDVLARTRR. Positions 41-85 constitute a Gla domain; it reads ANSFLEELKKGNLERECMEENCSYEEALEVFEDREKTNEFWNKYV. Glu46, Glu47, Glu54, Glu56, Glu59, and Glu60 each carry 4-carboxyglutamate. Cys57 and Cys62 are joined by a disulfide. N-linked (GlcNAc...) asparagine glycosylation occurs at Asn61. 6 positions are modified to 4-carboxyglutamate: Glu65, Glu66, Glu69, Glu72, Glu75, and Glu79. In terms of domain architecture, EGF-like 1; calcium-binding spans 86 to 122; it reads DGDQCESNPCQNQGTCKDGLGMYTCSCVEGYEGQDCE. 11 disulfides stabilise this stretch: Cys90-Cys101, Cys95-Cys110, Cys112-Cys121, Cys129-Cys140, Cys136-Cys149, Cys151-Cys164, Cys172-Cys340, Cys239-Cys244, Cys259-Cys275, Cys388-Cys402, and Cys413-Cys441. The residue at position 103 (Asp103) is a (3R)-3-hydroxyaspartate. In terms of domain architecture, EGF-like 2 spans 125–165; that stretch reads TRKLCSLDNGGCDQFCKEEENSVLCSCASGYTLGDNGKSCI. Residues 183–230 are disordered; sequence SPATNSSEGPPEAPGPEQQDDGNLTATENPFNLLDSPEPPPEDDSSSL. Positions 184–232 are cleaved as a propeptide — activation peptide; it reads PATNSSEGPPEAPGPEQQDDGNLTATENPFNLLDSPEPPPEDDSSSLVR. Asn187 and Asn205 each carry an N-linked (GlcNAc...) asparagine glycan. The segment covering 203 to 212 has biased composition (polar residues); it reads DGNLTATENP. The Peptidase S1 domain occupies 233–465; sequence IVGGQDCRDG…FLKWIEKSMR (233 aa). Residues His274 and Asp320 each act as charge relay system in the active site. Ser417 serves as the catalytic Charge relay system.

It belongs to the peptidase S1 family. In terms of assembly, the two chains are formed from a single-chain precursor by the excision of two Arg residues and are held together by 1 or more disulfide bonds. Forms a heterodimer with SERPINA5. Post-translationally, the vitamin K-dependent, enzymatic carboxylation of some glutamate residues allows the modified protein to bind calcium. In terms of processing, N- and O-glycosylated. Proteolytically cleaved and activated by cathepsin CTSG. The activation peptide is cleaved by factor IXa (in the intrinsic pathway), or by factor VIIa (in the extrinsic pathway). Post-translationally, the iron and 2-oxoglutarate dependent 3-hydroxylation of aspartate and asparagine is (R) stereospecific within EGF domains.

It is found in the secreted. The catalysed reaction is Selective cleavage of Arg-|-Thr and then Arg-|-Ile bonds in prothrombin to form thrombin.. Inhibited by SERPINA5. Factor Xa is a vitamin K-dependent glycoprotein that converts prothrombin to thrombin in the presence of factor Va, calcium and phospholipid during blood clotting. Factor Xa activates pro-inflammatory signaling pathways in a protease-activated receptor (PAR)-dependent manner. The chain is Coagulation factor X (F10) from Oryctolagus cuniculus (Rabbit).